Reading from the N-terminus, the 202-residue chain is Dephospho-CoA kinase (202 aa).

Residues 3–202 (TIGITGGIGS…TKRPNPPDRL (200 aa)) form the DPCK domain. An ATP-binding site is contributed by 11 to 16 (GSGKSV). The tract at residues 138–161 (RAMARDGSSAETMRQRMLSQEREQ) is disordered.

Belongs to the CoaE family.

The protein resides in the cytoplasm. It carries out the reaction 3'-dephospho-CoA + ATP = ADP + CoA + H(+). The protein operates within cofactor biosynthesis; coenzyme A biosynthesis; CoA from (R)-pantothenate: step 5/5. Its function is as follows. Catalyzes the phosphorylation of the 3'-hydroxyl group of dephosphocoenzyme A to form coenzyme A. This is Dephospho-CoA kinase from Porphyromonas gingivalis (strain ATCC BAA-308 / W83).